The primary structure comprises 1939 residues: Myosin-4 (1939 aa).

Residues 33–82 enclose the Myosin N-terminal SH3-like domain; sequence DAKTSVFVVDPKESYVKAIVQSREGGKVTAKTEAGATVTVKEDQVFSMNP. A phosphothreonine mark is found at Thr-64 and Thr-69. Position 79 is a phosphoserine (Ser-79). Residues 86-782 form the Myosin motor domain; the sequence is DKIEDMAMMT…LLGTLEEMRD (697 aa). The residue at position 130 (Lys-130) is an N6,N6,N6-trimethyllysine. 179 to 186 is an ATP binding site; sequence GESGAGKT. Tyr-389 bears the Phosphotyrosine mark. At Thr-391 the chain carries Phosphothreonine. Phosphoserine is present on Ser-392. Thr-419 carries the phosphothreonine modification. Tyr-424 bears the Phosphotyrosine mark. Ser-625 is subject to Phosphoserine. The interval 659 to 681 is actin-binding; that stretch reads LNKLMTNLRSTHPHFVRCIIPNE. His-757 is subject to Pros-methylhistidine. An actin-binding region spans residues 761–775; sequence KFGHTKVFFKAGLLG. Residue Thr-776 is modified to Phosphothreonine. Residues 785–814 form the IQ domain; it reads LAQLITRTQAICRGFLMRVEFRKMMERRES. Residues 843–1939 are a coiled coil; it reads LLKSAETEKE…EVHTKVISEE (1097 aa). Phosphoserine is present on residues Ser-1092, Ser-1162, and Ser-1237. A Phosphothreonine modification is found at Thr-1241. At Ser-1243 the chain carries Phosphoserine. Thr-1255 is subject to Phosphothreonine. Position 1261 is a phosphoserine (Ser-1261). The residue at position 1265 (Thr-1265) is a Phosphothreonine. Ser-1278 carries the post-translational modification Phosphoserine. Residue Thr-1286 is modified to Phosphothreonine. A phosphoserine mark is found at Ser-1288, Ser-1292, Ser-1303, Ser-1306, and Ser-1413. The residue at position 1464 (Tyr-1464) is a Phosphotyrosine. Thr-1467 carries the phosphothreonine modification. Residue Ser-1474 is modified to Phosphoserine. At Tyr-1492 the chain carries Phosphotyrosine. Position 1495 is a phosphoserine (Ser-1495). Thr-1501 carries the post-translational modification Phosphothreonine. Ser-1514 is modified (phosphoserine). The residue at position 1517 (Thr-1517) is a Phosphothreonine. Residues Ser-1542, Ser-1547, Ser-1554, Ser-1574, Ser-1600, Ser-1603, Ser-1714, and Ser-1726 each carry the phosphoserine modification. Thr-1730 and Thr-1736 each carry phosphothreonine. At Ser-1739 the chain carries Phosphoserine.

It belongs to the TRAFAC class myosin-kinesin ATPase superfamily. Myosin family. Muscle myosin is a hexameric protein that consists of 2 heavy chain subunits (MHC), 2 alkali light chain subunits (MLC) and 2 regulatory light chain subunits (MLC-2).

The protein localises to the cytoplasm. The protein resides in the myofibril. Muscle contraction. In Homo sapiens (Human), this protein is Myosin-4 (MYH4).